The primary structure comprises 289 residues: Diaminopimelate epimerase (289 aa).

3 residues coordinate substrate: Asn13, Gln52, and Asn72. The active-site Proton donor is Cys81. Substrate-binding positions include 82-83, Asn167, Asn201, and 219-220; these read GN and ER. Cys228 functions as the Proton acceptor in the catalytic mechanism. 229–230 lines the substrate pocket; that stretch reads GT.

Belongs to the diaminopimelate epimerase family. As to quaternary structure, homodimer.

It is found in the cytoplasm. The catalysed reaction is (2S,6S)-2,6-diaminopimelate = meso-2,6-diaminopimelate. The protein operates within amino-acid biosynthesis; L-lysine biosynthesis via DAP pathway; DL-2,6-diaminopimelate from LL-2,6-diaminopimelate: step 1/1. Functionally, catalyzes the stereoinversion of LL-2,6-diaminopimelate (L,L-DAP) to meso-diaminopimelate (meso-DAP), a precursor of L-lysine and an essential component of the bacterial peptidoglycan. This Caulobacter sp. (strain K31) protein is Diaminopimelate epimerase.